Reading from the N-terminus, the 120-residue chain is Large ribosomal subunit protein uL18 (120 aa).

This sequence belongs to the universal ribosomal protein uL18 family. As to quaternary structure, part of the 50S ribosomal subunit; part of the 5S rRNA/L5/L18/L25 subcomplex. Contacts the 5S and 23S rRNAs.

Its function is as follows. This is one of the proteins that bind and probably mediate the attachment of the 5S RNA into the large ribosomal subunit, where it forms part of the central protuberance. This Azorhizobium caulinodans (strain ATCC 43989 / DSM 5975 / JCM 20966 / LMG 6465 / NBRC 14845 / NCIMB 13405 / ORS 571) protein is Large ribosomal subunit protein uL18.